A 197-amino-acid chain; its full sequence is dTTP/UTP pyrophosphatase (197 aa).

Aspartate 70 acts as the Proton acceptor in catalysis.

The protein belongs to the Maf family. YhdE subfamily. Requires a divalent metal cation as cofactor.

It localises to the cytoplasm. The enzyme catalyses dTTP + H2O = dTMP + diphosphate + H(+). The catalysed reaction is UTP + H2O = UMP + diphosphate + H(+). Functionally, nucleoside triphosphate pyrophosphatase that hydrolyzes dTTP and UTP. May have a dual role in cell division arrest and in preventing the incorporation of modified nucleotides into cellular nucleic acids. The chain is dTTP/UTP pyrophosphatase (yceF2) from Shigella sonnei (strain Ss046).